The primary structure comprises 488 residues: Glutamyl-tRNA(Gln) amidotransferase subunit A (488 aa).

Residues K77 and S152 each act as charge relay system in the active site. S176 (acyl-ester intermediate) is an active-site residue.

The protein belongs to the amidase family. GatA subfamily. Heterotrimer of A, B and C subunits.

It carries out the reaction L-glutamyl-tRNA(Gln) + L-glutamine + ATP + H2O = L-glutaminyl-tRNA(Gln) + L-glutamate + ADP + phosphate + H(+). Allows the formation of correctly charged Gln-tRNA(Gln) through the transamidation of misacylated Glu-tRNA(Gln) in organisms which lack glutaminyl-tRNA synthetase. The reaction takes place in the presence of glutamine and ATP through an activated gamma-phospho-Glu-tRNA(Gln). The polypeptide is Glutamyl-tRNA(Gln) amidotransferase subunit A (Streptococcus gordonii (strain Challis / ATCC 35105 / BCRC 15272 / CH1 / DL1 / V288)).